The following is an 88-amino-acid chain: Small ribosomal subunit protein bS18 (88 aa).

Positions 1 to 22 (MSTKNAKPKKEAQRRPSRKAKV) are disordered.

It belongs to the bacterial ribosomal protein bS18 family. In terms of assembly, part of the 30S ribosomal subunit. Forms a tight heterodimer with protein bS6.

Functionally, binds as a heterodimer with protein bS6 to the central domain of the 16S rRNA, where it helps stabilize the platform of the 30S subunit. This chain is Small ribosomal subunit protein bS18 (rpsR), found in Thermus thermophilus.